Consider the following 525-residue polypeptide: MTDNIHKHRILILDFGSQYTQLVARRVRELGVYCELWAWDVTEAQIREFNPSGIILSGGPESTTEENSPRAPQYVFEAGVPVFGVCYGMQTMAMQLGGHVEGSNEREFGYAQVEVLTDSALIRGIEDSLTADGKPLLDVWMSHGDKVTAIPSDFVTVASTESCPFAIMANEEKRFYGVQFHPEVTHTRQGMRMLERFVRDICQCEALWTPAKIIDDAVARIREQVGDDKVILGLSGGVDSSVTAMLLHRAIGKNLTCVFVDNGLLRLNEAEQVMDMFGDHFGLNIVHVPAEDRFLSALAGENDPEAKRKIIGRVFVEVFDEEALKLEDVKWLAQGTIYPDVIESAASATGKAHVIKSHHNVGGLPKEMKMGLVEPLKELFKDEVRKIGLELGLPYDMLYRHPFPGPGLGVRVLGEVKKEYCDLLRRADAIFIEELRKADLYDKVSQAFTVFLPVRSVGVMGDGRKYDWVVSLRAVETIDFMTAHWAHLPYGFLGRVSNRIINEVNGISRVVYDISGKPPATIEWE.

In terms of domain architecture, Glutamine amidotransferase type-1 spans 9 to 207; sequence RILILDFGSQ…VRDICQCEAL (199 aa). Cys86 functions as the Nucleophile in the catalytic mechanism. Active-site residues include His181 and Glu183. The region spanning 208–400 is the GMPS ATP-PPase domain; it reads WTPAKIIDDA…LGLPYDMLYR (193 aa). Position 235 to 241 (235 to 241) interacts with ATP; the sequence is SGGVDSS.

As to quaternary structure, homodimer.

It carries out the reaction XMP + L-glutamine + ATP + H2O = GMP + L-glutamate + AMP + diphosphate + 2 H(+). It functions in the pathway purine metabolism; GMP biosynthesis; GMP from XMP (L-Gln route): step 1/1. Functionally, catalyzes the synthesis of GMP from XMP. The polypeptide is GMP synthase [glutamine-hydrolyzing] (Salmonella arizonae (strain ATCC BAA-731 / CDC346-86 / RSK2980)).